The chain runs to 328 residues: Olfactory receptor 2AJ1 (328 aa).

Residues 1–25 (MGHQNHTFSSDFILLGLFSSSPTSV) are Extracellular-facing. Asn5 carries N-linked (GlcNAc...) asparagine glycosylation. Residues 26–49 (VFFLVLFVIFIMSVTENTLMILLI) traverse the membrane as a helical segment. The Cytoplasmic portion of the chain corresponds to 50 to 57 (RSDSRLHT). Residues 58–79 (PMYFLLSHLSLMDILHVSNIVP) traverse the membrane as a helical segment. The Extracellular segment spans residues 80–100 (KMVTNFLSGSRTISFAGCGFQ). A disulfide bridge links Cys97 with Cys189. Residues 101-120 (VFLSLTLLGGECLLLAAMSC) traverse the membrane as a helical segment. Over 121–139 (DRYVAICHPLRYPILMKEY) the chain is Cytoplasmic. Residues 140-158 (ASALMAGGSWLIGVFNSTV) form a helical membrane-spanning segment. Residues 159 to 195 (HTAYALQFPFCGSRAIDHFFCEVPAMLKLSCADTTRY) are Extracellular-facing. Residues 196-219 (ERGVCVSAVIFLLIPFSLISASYG) form a helical membrane-spanning segment. Residues 220–236 (QIILTVLQMKSSEARKK) are Cytoplasmic-facing. A helical transmembrane segment spans residues 237 to 259 (SFSTCSFHMIVVTMYYGPFIFTY). The Extracellular portion of the chain corresponds to 260 to 272 (MRPKSYHTPGQDK). The helical transmembrane segment at 273–292 (FLAIFYTILTPTLNPFIYSF) threads the bilayer. At 293–328 (RNKDVLAVMKNMLKSNFLHKKMNRKIPECVFCLFLC) the chain is on the cytoplasmic side.

Belongs to the G-protein coupled receptor 1 family.

The protein localises to the cell membrane. Functionally, odorant receptor. The protein is Olfactory receptor 2AJ1 (OR2AJ1) of Homo sapiens (Human).